Consider the following 244-residue polypeptide: 14-3-3 protein beta/alpha-B (244 aa).

Position 1 is an N-acetylmethionine (Met1).

This sequence belongs to the 14-3-3 family. In terms of assembly, homodimer, and heterodimer with other family members.

The protein localises to the cytoplasm. In terms of biological role, adapter protein implicated in the regulation of a large spectrum of both general and specialized signaling pathways. Binds to a large number of partners, usually by recognition of a phosphoserine or phosphothreonine motif. Binding generally results in the modulation of the activity of the binding partner. The chain is 14-3-3 protein beta/alpha-B (ywhab-b) from Xenopus laevis (African clawed frog).